The following is a 65-amino-acid chain: VESP-VB2 (65 aa).

A signal peptide spans 1–23 (MKMSILFLFALIASLACLQLTFA). AXPX repeat units follow at residues 23-26 (AAPA), 27-30 (ASPF), 31-34 (ANPG), 35-38 (ASPE), 39-42 (AAPL), 43-46 (ADPL), and 47-50 (ADPF). Positions 24 to 49 (APAASPFANPGASPEAAPLADPLADP) are excised as a propeptide. Leu62 is subject to Leucine amide.

Belongs to the MCD family. Mastoparan subfamily. Expressed by the venom gland.

The protein localises to the secreted. Its function is as follows. Antimicrobial peptide. Shows activity against both Gram-positive and -negative bacteria, as well against fungi. Also promotes important mast cell degranulation. Shows little hemolytic activity on rabbit and human erythrocytes. Its mast cell degranulation activity may be related to the activation of G-protein coupled receptors in mast cells as well as interaction with other proteins located in cell endosomal membranes in the mast cells. The sequence is that of VESP-VB2 from Vespa bicolor (Black shield wasp).